A 737-amino-acid chain; its full sequence is Protein kinase C epsilon type (737 aa).

Residues 1–117 (MVVFNGLLKI…NGSRHFEDWI (117 aa)) enclose the C2 domain. Ser62 carries the phosphoserine modification. A Phorbol-ester/DAG-type 1 zinc finger spans residues 169–220 (GHKFMATYLRQPTYCSHCRDFIWGVIGKQGYQCQVCTCVVHKRCHELIITKC). Residues 223-228 (LKKQET) carry the Interaction with actin motif. Residue Thr228 is modified to Phosphothreonine. At Ser234 the chain carries Phosphoserine. The Phorbol-ester/DAG-type 2 zinc-finger motif lies at 242-292 (PHKFGIHNYKVPTFCDHCGSLLWGLLRQGLQCKVCKMNVHRRCETNVAPNC). At Thr309 the chain carries Phosphothreonine. The segment at 310 to 356 (PDKITNSGQRRKKLAAGAESPQPASGNSPSEDDRSKSAPTSPCDQEL) is disordered. Phosphoserine is present on residues Ser316, Ser329, Ser337, and Ser346. Thr349 carries the post-translational modification Phosphothreonine. A Phosphoserine; by MAPK11 and MAPK14 modification is found at Ser350. Phosphoserine occurs at positions 368 and 388. The segment at 369-398 (FDNRGEEHRASSSTDGQLASPGENGEVRQG) is disordered. The Protein kinase domain maps to 408 to 668 (FNFIKVLGKG…EDAIKQHPFF (261 aa)). Residues 414 to 422 (LGKGSFGKV) and Lys437 each bind ATP. The active-site Proton acceptor is the Asp532. Position 566 is a phosphothreonine; by PDPK1 (Thr566). Residues 669–737 (KEIDWVLLEQ…FSYFGEDLMP (69 aa)) form the AGC-kinase C-terminal domain. A phosphothreonine mark is found at Thr703 and Thr710. Residue Ser729 is modified to Phosphoserine.

It belongs to the protein kinase superfamily. AGC Ser/Thr protein kinase family. PKC subfamily. As to quaternary structure, forms a ternary complex with TRIM63 and RACK1/GN2BL1. Can form a complex with PDLIM5 and N-type calcium channel. Interacts with COPB1. Interacts with DGKQ. Interacts with STAT3. Interacts with YWHAB. Interacts with HSP90AB1; promotes functional activation in a heat shock-dependent manner. Interacts (via phorbol-ester/DAG-type 2 domain) with PRPH and VIM. Interacts with NLRP5/MATER. Phosphorylation on Thr-566 by PDPK1 triggers autophosphorylation on Ser-729. Phosphorylation in the hinge domain at Ser-350 by MAPK11 or MAPK14, Ser-346 by GSK3B and Ser-368 by autophosphorylation is required for interaction with YWHAB. In response to growth factors, phosphorylated at Thr-703 and Ser-729 by the mTORC2 complex, promoting autophosphorylation and activation of PRKCE.

The protein resides in the cytoplasm. Its subcellular location is the cytoskeleton. It localises to the cell membrane. The protein localises to the perinuclear region. It is found in the nucleus. It carries out the reaction L-seryl-[protein] + ATP = O-phospho-L-seryl-[protein] + ADP + H(+). The enzyme catalyses L-threonyl-[protein] + ATP = O-phospho-L-threonyl-[protein] + ADP + H(+). Novel PKCs (PRKCD, PRKCE, PRKCH and PRKCQ) are calcium-insensitive, but activated by diacylglycerol (DAG) and phosphatidylserine. Three specific sites; Thr-566 (activation loop of the kinase domain), Thr-710 (turn motif) and Ser-729 (hydrophobic region), need to be phosphorylated for its full activation. Calcium-independent, phospholipid- and diacylglycerol (DAG)-dependent serine/threonine-protein kinase that plays essential roles in the regulation of multiple cellular processes linked to cytoskeletal proteins, such as cell adhesion, motility, migration and cell cycle, functions in neuron growth and ion channel regulation, and is involved in immune response, cancer cell invasion and regulation of apoptosis. Mediates cell adhesion to the extracellular matrix via integrin-dependent signaling, by mediating angiotensin-2-induced activation of integrin beta-1 (ITGB1) in cardiac fibroblasts. Phosphorylates MARCKS, which phosphorylates and activates PTK2/FAK, leading to the spread of cardiomyocytes. Involved in the control of the directional transport of ITGB1 in mesenchymal cells by phosphorylating vimentin (VIM), an intermediate filament (IF) protein. In epithelial cells, associates with and phosphorylates keratin-8 (KRT8), which induces targeting of desmoplakin at desmosomes and regulates cell-cell contact. Phosphorylates IQGAP1, which binds to CDC42, mediating epithelial cell-cell detachment prior to migration. During cytokinesis, forms a complex with YWHAB, which is crucial for daughter cell separation, and facilitates abscission by a mechanism which may implicate the regulation of RHOA. In cardiac myocytes, regulates myofilament function and excitation coupling at the Z-lines, where it is indirectly associated with F-actin via interaction with COPB1. During endothelin-induced cardiomyocyte hypertrophy, mediates activation of PTK2/FAK, which is critical for cardiomyocyte survival and regulation of sarcomere length. Plays a role in the pathogenesis of dilated cardiomyopathy via persistent phosphorylation of troponin I (TNNI3). Involved in nerve growth factor (NFG)-induced neurite outgrowth and neuron morphological change independently of its kinase activity, by inhibition of RHOA pathway, activation of CDC42 and cytoskeletal rearrangement. May be involved in presynaptic facilitation by mediating phorbol ester-induced synaptic potentiation. Phosphorylates gamma-aminobutyric acid receptor subunit gamma-2 (GABRG2), which reduces the response of GABA receptors to ethanol and benzodiazepines and may mediate acute tolerance to the intoxicating effects of ethanol. Upon PMA treatment, phosphorylates the capsaicin- and heat-activated cation channel TRPV1, which is required for bradykinin-induced sensitization of the heat response in nociceptive neurons. Is able to form a complex with PDLIM5 and N-type calcium channel, and may enhance channel activities and potentiates fast synaptic transmission by phosphorylating the pore-forming alpha subunit CACNA1B (CaV2.2). Downstream of TLR4, plays an important role in the lipopolysaccharide (LPS)-induced immune response by phosphorylating and activating TICAM2/TRAM, which in turn activates the transcription factor IRF3 and subsequent cytokines production. In differentiating erythroid progenitors, is regulated by EPO and controls the protection against the TNFSF10/TRAIL-mediated apoptosis, via BCL2. May be involved in the regulation of the insulin-induced phosphorylation and activation of AKT1. Phosphorylates NLRP5/MATER and may thereby modulate AKT pathway activation in cumulus cells. Phosphorylates and activates LRRK1, which phosphorylates RAB proteins involved in intracellular trafficking. The polypeptide is Protein kinase C epsilon type (Prkce) (Rattus norvegicus (Rat)).